Consider the following 599-residue polypeptide: Elongation factor 4 (599 aa).

Residues 2–184 form the tr-type G domain; the sequence is KNIRNFSIIA…RLVRDIPPPE (183 aa). GTP contacts are provided by residues 14 to 19 and 131 to 134; these read DHGKST and NKID.

This sequence belongs to the TRAFAC class translation factor GTPase superfamily. Classic translation factor GTPase family. LepA subfamily.

The protein localises to the cell inner membrane. It carries out the reaction GTP + H2O = GDP + phosphate + H(+). Required for accurate and efficient protein synthesis under certain stress conditions. May act as a fidelity factor of the translation reaction, by catalyzing a one-codon backward translocation of tRNAs on improperly translocated ribosomes. Back-translocation proceeds from a post-translocation (POST) complex to a pre-translocation (PRE) complex, thus giving elongation factor G a second chance to translocate the tRNAs correctly. Binds to ribosomes in a GTP-dependent manner. The sequence is that of Elongation factor 4 from Escherichia fergusonii (strain ATCC 35469 / DSM 13698 / CCUG 18766 / IAM 14443 / JCM 21226 / LMG 7866 / NBRC 102419 / NCTC 12128 / CDC 0568-73).